We begin with the raw amino-acid sequence, 919 residues long: Leucine--tRNA ligase (919 aa).

The short motif at 83 to 93 (PYPSGKLHMGH) is the 'HIGH' region element. Positions 670–674 (KMSKS) match the 'KMSKS' region motif. Residue K673 coordinates ATP.

Belongs to the class-I aminoacyl-tRNA synthetase family.

The protein localises to the cytoplasm. The catalysed reaction is tRNA(Leu) + L-leucine + ATP = L-leucyl-tRNA(Leu) + AMP + diphosphate. This Psychrobacter cryohalolentis (strain ATCC BAA-1226 / DSM 17306 / VKM B-2378 / K5) protein is Leucine--tRNA ligase.